Here is a 608-residue protein sequence, read N- to C-terminus: Glutamyl-tRNA(Gln) amidotransferase subunit E (608 aa).

Residues 401 to 428 (PEETRAANPDGTTRFLRPRPGAARMYPE) form a disordered region.

It belongs to the GatB/GatE family. GatE subfamily. Heterodimer of GatD and GatE.

The catalysed reaction is L-glutamyl-tRNA(Gln) + L-glutamine + ATP + H2O = L-glutaminyl-tRNA(Gln) + L-glutamate + ADP + phosphate + H(+). Allows the formation of correctly charged Gln-tRNA(Gln) through the transamidation of misacylated Glu-tRNA(Gln) in organisms which lack glutaminyl-tRNA synthetase. The reaction takes place in the presence of glutamine and ATP through an activated gamma-phospho-Glu-tRNA(Gln). The GatDE system is specific for glutamate and does not act on aspartate. The polypeptide is Glutamyl-tRNA(Gln) amidotransferase subunit E (Pyrobaculum arsenaticum (strain DSM 13514 / JCM 11321 / PZ6)).